Consider the following 823-residue polypeptide: Ankyrin repeat domain-containing protein 20B (823 aa).

6 ANK repeats span residues S32–K65, Q66–I95, E99–L128, Y132–A161, D165–A194, and L198–A227. Disordered regions lie at residues P302–D343 and V355–E401. Positions Q372 to Q382 are enriched in basic and acidic residues. Coiled coils occupy residues K431 to E480, E565 to T724, and L776 to E805.

This Homo sapiens (Human) protein is Ankyrin repeat domain-containing protein 20B (ANKRD20A8P).